Consider the following 338-residue polypeptide: Holliday junction branch migration complex subunit RuvB (338 aa).

Residues 1–14 (MENDHGILSDHPSG) show a composition bias toward basic and acidic residues. Residues 1 to 21 (MENDHGILSDHPSGEEESQVE) are disordered. The tract at residues 3–185 (NDHGILSDHP…FGIVEHMNYY (183 aa)) is large ATPase domain (RuvB-L). Residues leucine 24, arginine 25, glycine 66, lysine 69, threonine 70, threonine 71, 132-134 (EDY), arginine 175, tyrosine 185, and arginine 222 each bind ATP. Residue threonine 70 participates in Mg(2+) binding. The tract at residues 186 to 256 (TQDELTKIIF…IVKQALSLLQ (71 aa)) is small ATPAse domain (RuvB-S). The head domain (RuvB-H) stretch occupies residues 259–338 (DRGLDEIDRK…LGIEYPTDKN (80 aa)). Arginine 314 and arginine 319 together coordinate DNA.

This sequence belongs to the RuvB family. As to quaternary structure, homohexamer. Forms an RuvA(8)-RuvB(12)-Holliday junction (HJ) complex. HJ DNA is sandwiched between 2 RuvA tetramers; dsDNA enters through RuvA and exits via RuvB. An RuvB hexamer assembles on each DNA strand where it exits the tetramer. Each RuvB hexamer is contacted by two RuvA subunits (via domain III) on 2 adjacent RuvB subunits; this complex drives branch migration. In the full resolvosome a probable DNA-RuvA(4)-RuvB(12)-RuvC(2) complex forms which resolves the HJ.

It localises to the cytoplasm. It catalyses the reaction ATP + H2O = ADP + phosphate + H(+). In terms of biological role, the RuvA-RuvB-RuvC complex processes Holliday junction (HJ) DNA during genetic recombination and DNA repair, while the RuvA-RuvB complex plays an important role in the rescue of blocked DNA replication forks via replication fork reversal (RFR). RuvA specifically binds to HJ cruciform DNA, conferring on it an open structure. The RuvB hexamer acts as an ATP-dependent pump, pulling dsDNA into and through the RuvAB complex. RuvB forms 2 homohexamers on either side of HJ DNA bound by 1 or 2 RuvA tetramers; 4 subunits per hexamer contact DNA at a time. Coordinated motions by a converter formed by DNA-disengaged RuvB subunits stimulates ATP hydrolysis and nucleotide exchange. Immobilization of the converter enables RuvB to convert the ATP-contained energy into a lever motion, pulling 2 nucleotides of DNA out of the RuvA tetramer per ATP hydrolyzed, thus driving DNA branch migration. The RuvB motors rotate together with the DNA substrate, which together with the progressing nucleotide cycle form the mechanistic basis for DNA recombination by continuous HJ branch migration. Branch migration allows RuvC to scan DNA until it finds its consensus sequence, where it cleaves and resolves cruciform DNA. The protein is Holliday junction branch migration complex subunit RuvB of Limosilactobacillus reuteri (strain DSM 20016) (Lactobacillus reuteri).